Reading from the N-terminus, the 680-residue chain is GTPase Obg (680 aa).

The region spanning 2–160 is the Obg domain; the sequence is DQFIDVVSFE…LNIRLEVKLI (159 aa). One can recognise an OBG-type G domain in the interval 161–336; that stretch reads ADIGLVGMPN…LDGDMLDKVT (176 aa). GTP-binding positions include 167–174, 192–196, 214–217, 281–284, and 317–319; these read GMPNTGKS, FTTLT, DIPG, NKTD, and PEI. 2 residues coordinate Mg(2+): serine 174 and threonine 194. Residues 371–680 are radical SAM domain; that stretch reads TKRVFGPVVS…NGVLSYAVNI (310 aa). One can recognise a Radical SAM core domain in the interval 383–613; it reads LGNSLGIDVI…IEIDVPSVSD (231 aa). The [4Fe-4S] cluster site is built by cysteine 397, cysteine 401, and cysteine 404.

The protein belongs to the TRAFAC class OBG-HflX-like GTPase superfamily. OBG GTPase family. In terms of assembly, monomer. The cofactor is Mg(2+). [4Fe-4S] cluster is required as a cofactor.

It is found in the cytoplasm. An essential GTPase which binds GTP, GDP and possibly (p)ppGpp with moderate affinity, with high nucleotide exchange rates and a fairly low GTP hydrolysis rate. Plays a role in control of the cell cycle, stress response, ribosome biogenesis and in those bacteria that undergo differentiation, in morphogenesis control. The chain is GTPase Obg from Brachyspira hyodysenteriae (strain ATCC 49526 / WA1).